The chain runs to 175 residues: uncharacterized protein (175 aa).

This is an uncharacterized protein from Mycobacterium tuberculosis (strain ATCC 25618 / H37Rv).